A 443-amino-acid polypeptide reads, in one-letter code: Tol-Pal system protein TolB (443 aa).

An N-terminal signal peptide occupies residues 1–33 (MKIGIINTKIRTVFSAFACMIAASLVCTMPARA).

Belongs to the TolB family. In terms of assembly, the Tol-Pal system is composed of five core proteins: the inner membrane proteins TolA, TolQ and TolR, the periplasmic protein TolB and the outer membrane protein Pal. They form a network linking the inner and outer membranes and the peptidoglycan layer.

It localises to the periplasm. Its function is as follows. Part of the Tol-Pal system, which plays a role in outer membrane invagination during cell division and is important for maintaining outer membrane integrity. The polypeptide is Tol-Pal system protein TolB (Brucella abortus (strain S19)).